The primary structure comprises 283 residues: tRNA pseudouridine synthase A (283 aa).

D73 functions as the Nucleophile in the catalytic mechanism. The interval 120-124 (FHARF) is RNA binding. Y131 contributes to the substrate binding site. The tract at residues 181–185 (QCQSR) is interaction with tRNA.

It belongs to the tRNA pseudouridine synthase TruA family. Homodimer.

It carries out the reaction uridine(38/39/40) in tRNA = pseudouridine(38/39/40) in tRNA. Formation of pseudouridine at positions 38, 39 and 40 in the anticodon stem and loop of transfer RNAs. The chain is tRNA pseudouridine synthase A from Pectobacterium atrosepticum (strain SCRI 1043 / ATCC BAA-672) (Erwinia carotovora subsp. atroseptica).